A 331-amino-acid polypeptide reads, in one-letter code: Ketol-acid reductoisomerase (NADP(+)) (331 aa).

The KARI N-terminal Rossmann domain occupies 2 to 182 (ARMYYDTDAN…GGTRAGILET (181 aa)). NADP(+)-binding positions include 25 to 28 (YGSQ), Ser-51, Ser-53, and 83 to 86 (DEVQ). His-108 is an active-site residue. Residue Gly-134 participates in NADP(+) binding. The region spanning 183–328 (TFREETETDL…KDLRAMFSWL (146 aa)) is the KARI C-terminal knotted domain. Positions 191, 195, 227, and 231 each coordinate Mg(2+). Ser-252 lines the substrate pocket.

It belongs to the ketol-acid reductoisomerase family. It depends on Mg(2+) as a cofactor.

The enzyme catalyses (2R)-2,3-dihydroxy-3-methylbutanoate + NADP(+) = (2S)-2-acetolactate + NADPH + H(+). The catalysed reaction is (2R,3R)-2,3-dihydroxy-3-methylpentanoate + NADP(+) = (S)-2-ethyl-2-hydroxy-3-oxobutanoate + NADPH + H(+). The protein operates within amino-acid biosynthesis; L-isoleucine biosynthesis; L-isoleucine from 2-oxobutanoate: step 2/4. It functions in the pathway amino-acid biosynthesis; L-valine biosynthesis; L-valine from pyruvate: step 2/4. Its function is as follows. Involved in the biosynthesis of branched-chain amino acids (BCAA). Catalyzes an alkyl-migration followed by a ketol-acid reduction of (S)-2-acetolactate (S2AL) to yield (R)-2,3-dihydroxy-isovalerate. In the isomerase reaction, S2AL is rearranged via a Mg-dependent methyl migration to produce 3-hydroxy-3-methyl-2-ketobutyrate (HMKB). In the reductase reaction, this 2-ketoacid undergoes a metal-dependent reduction by NADPH to yield (R)-2,3-dihydroxy-isovalerate. The protein is Ketol-acid reductoisomerase (NADP(+)) of Rippkaea orientalis (strain PCC 8801 / RF-1) (Cyanothece sp. (strain PCC 8801)).